A 75-amino-acid polypeptide reads, in one-letter code: Protein SlyX homolog (75 aa).

Residues 56 to 75 (KNMDSSNMEDPANEPPPPHY) form a disordered region.

The protein belongs to the SlyX family.

This is Protein SlyX homolog from Vibrio parahaemolyticus serotype O3:K6 (strain RIMD 2210633).